The chain runs to 92 residues: MGRSLKKGPFVDEHLMKKVEAQTNAERKSVIKTWSRRSTIFPNFVGLTIAVYDGRKHVPVYVQEDMVGHKLGEFAPTRTYRGHAADDKKTRR.

The protein belongs to the universal ribosomal protein uS19 family.

Functionally, protein S19 forms a complex with S13 that binds strongly to the 16S ribosomal RNA. This Lactococcus lactis subsp. cremoris (strain MG1363) protein is Small ribosomal subunit protein uS19.